A 1162-amino-acid polypeptide reads, in one-letter code: Enhanced level of genomic instability 1 (1162 aa).

Disordered regions lie at residues 1-136, 144-163, 179-202, 249-319, 348-380, 611-634, and 666-697; these read MTDV…ADNQ, KAGK…KPKP, LGVN…ATPT, KTDA…TKKR, METP…RRSC, RSME…PNGE, and WSGN…SSSN. Basic residues predominate over residues 65–78; sequence KQKHREKHKRKREE. Residues 79–111 show a composition bias toward basic and acidic residues; it reads KRRAALMEDQKSTTEEVKANAKEKPQPLREKSS. The span at 125–136 shows a compositional bias: polar residues; sequence PLKSSTPVADNQ. Residues 268-278 are compositionally biased toward basic residues; it reads KRLRGRPRSRR. Composition is skewed to low complexity over residues 666–676 and 684–697; these read WSGNGGSNRNS and DMSN…SSSN. 703-710 provides a ligand contact to ATP; that stretch reads GPSSSGKT. 2 disordered regions span residues 900-923 and 975-1008; these read GDST…SRLA and QAAG…SDGH. The span at 984–993 shows a compositional bias: basic residues; it reads AAKRKSRSPK. Over residues 998–1008 the composition is skewed to polar residues; sequence SSATGQKSDGH.

This sequence belongs to the ELG1 family. Component of a heteropentameric Elg1 RFC-like complex composed of one large subunit (elg1) and four small subunits (RfC4, RfC38, CG8142 and RfC3). As part of the complex, might interact with the Enok complex, composed of enok, Br140, Eaf6 and Ing5. Within the Enok complex, interacts directly with Br140. As to expression, expressed at higher levels in the germline nurse cells than in the somatic follicle cells.

The protein localises to the nucleus. Functionally, has an important role in DNA replication and in maintaining genome integrity during replication stress. Promotes PCNA deubiquitination. As component of the Elg1 RFC-like complex, regulates the functions of the DNA polymerase processivity factor PCNA by unloading it from DNA after replication during the S phase of the cell cycle. The PCNA-unloading might be regulated via interaction with the Enok acetyltransferase complex. Might have a role in restarting of stalled/regressed replication forks during replication stress. In the ovaries, has a role in nurse cell endoreplication. The protein is Enhanced level of genomic instability 1 of Drosophila melanogaster (Fruit fly).